A 103-amino-acid polypeptide reads, in one-letter code: Large ribosomal subunit protein bL21 (103 aa).

It belongs to the bacterial ribosomal protein bL21 family. In terms of assembly, part of the 50S ribosomal subunit. Contacts protein L20.

This protein binds to 23S rRNA in the presence of protein L20. The protein is Large ribosomal subunit protein bL21 of Lactobacillus delbrueckii subsp. bulgaricus (strain ATCC 11842 / DSM 20081 / BCRC 10696 / JCM 1002 / NBRC 13953 / NCIMB 11778 / NCTC 12712 / WDCM 00102 / Lb 14).